The sequence spans 1807 residues: Nucleoporin nup189 (1807 aa).

A disordered region spans residues 1 to 118 (MFGQNNSSGF…SGGGLFGSNT (118 aa)). 2 GLFG repeats span residues 26–29 (GLFG) and 66–69 (GLFG). A compositionally biased stretch (polar residues) spans 29 to 61 (GSNSNTPGNTLFGSQNTSTTGFGQNTTQPLFGS). Positions 62 to 77 (NTNGGLFGNRNNTTTT) are enriched in low complexity. The segment covering 78 to 90 (GGTGFGMSSGTGM) has biased composition (gly residues). Residues 93 to 108 (QSNTPAFGGTNNATNP) are compositionally biased toward polar residues. GLFG repeat units lie at residues 112–115 (GLFG), 152–155 (GLFG), 177–180 (GLFG), 308–311 (GLFG), 335–338 (GLFG), 350–353 (GLFG), 381–384 (GLFG), 399–402 (GLFG), 435–438 (GLFG), and 521–524 (GLFG). The segment covering 565–584 (PGTGLFGSTQTNNATSNTGT) has biased composition (polar residues). Residues 565–685 (PGTGLFGSTQ…SSTTSQVAPT (121 aa)) are disordered. GLFG repeat units follow at residues 585-588 (GLFG), 611-614 (GLFG), 627-630 (GLFG), and 646-649 (GLFG). Over residues 588–600 (GSNNANTTNTGGS) the composition is skewed to low complexity. Residues 603-644 (NKPSTTTGGLFGNTTAQQPSTTTSGLFGASNTNNQAQTSNFG) are compositionally biased toward polar residues. Over residues 653–663 (AGQQQQPLQAS) the composition is skewed to low complexity. Over residues 664–685 (IDQNPYGNNPLFSSTTSQVAPT) the composition is skewed to polar residues. At Ser-724 the chain carries Phosphoserine. The tract at residues 785 to 814 (QNGVKNGNDAKSDSKVQEKAPQNEADGSLK) is disordered. Over residues 792 to 802 (NDAKSDSKVQE) the composition is skewed to basic and acidic residues. The 142-residue stretch at 822–963 (SDDYWMKPSI…GKWIFKVQHF (142 aa)) folds into the Peptidase S59 domain. Positions 974–1020 (EENDMSSTSNEAGNLKKYDQPNLKVSGKNDSFVTHHTPGAFPNDSKN) are disordered. Ser-1051 carries the post-translational modification Phosphoserine. Residues 1082–1104 (KENNVPLSEDDLSNSSESSNESV) form a disordered region. Low complexity predominate over residues 1094 to 1104 (SNSSESSNESV).

This sequence belongs to the nucleoporin GLFG family. As to quaternary structure, interacts (via G-L-F-G repeats) with rpn15/dss1. Interacts with raf1. Interacts with ned1. Post-translationally, nup189 is autocatalytically cleaved in nup98 and nup96.

It localises to the nucleus. Its subcellular location is the nuclear pore complex. In terms of biological role, functions as a component of the nuclear pore complex (NPC). NPC components, collectively referred to as nucleoporins (NUPs), can play the role of both NPC structural components and of docking or interaction partners for transiently associated nuclear transport factors. Active directional transport is assured by both, a Phe-Gly (FG) repeat affinity gradient for these transport factors across the NPC and a transport cofactor concentration gradient across the nuclear envelope. Nup189 is autocatalytically cleaved in vivo in 2 polypeptides which assume different functions in the NPC. Nup98 as one of the FG repeat nucleoporins participates in karyopherin interactions and contains part of the autocatalytic cleavage activity. Nup96 as part of the NUP84 complex is involved in nuclear poly(A)+ RNA and tRNA export. This chain is Nucleoporin nup189 (nup189), found in Schizosaccharomyces pombe (strain 972 / ATCC 24843) (Fission yeast).